The following is a 432-amino-acid chain: Serine--tRNA ligase (432 aa).

Position 236 to 238 (236 to 238 (TSE)) interacts with L-serine. ATP is bound at residue 267–269 (RSE). Position 290 (Glu-290) interacts with L-serine. 354–357 (EISS) serves as a coordination point for ATP. Position 390 (Ser-390) interacts with L-serine.

The protein belongs to the class-II aminoacyl-tRNA synthetase family. Type-1 seryl-tRNA synthetase subfamily. Homodimer. The tRNA molecule binds across the dimer.

The protein localises to the cytoplasm. It catalyses the reaction tRNA(Ser) + L-serine + ATP = L-seryl-tRNA(Ser) + AMP + diphosphate + H(+). The catalysed reaction is tRNA(Sec) + L-serine + ATP = L-seryl-tRNA(Sec) + AMP + diphosphate + H(+). Its pathway is aminoacyl-tRNA biosynthesis; selenocysteinyl-tRNA(Sec) biosynthesis; L-seryl-tRNA(Sec) from L-serine and tRNA(Sec): step 1/1. Functionally, catalyzes the attachment of serine to tRNA(Ser). Is also able to aminoacylate tRNA(Sec) with serine, to form the misacylated tRNA L-seryl-tRNA(Sec), which will be further converted into selenocysteinyl-tRNA(Sec). The sequence is that of Serine--tRNA ligase from Pseudoalteromonas atlantica (strain T6c / ATCC BAA-1087).